Here is a 242-residue protein sequence, read N- to C-terminus: NADPH-dependent pterin aldehyde reductase (242 aa).

Residue T2 is modified to N-acetylthreonine. Position 21–50 (21–50) interacts with NADP(+); the sequence is LITGVSKGLGRALALELAKRGHTVIGCARS. Position 153 (S153) interacts with substrate. The active-site Proton acceptor is Y166. Residue K170 coordinates NADP(+).

The protein belongs to the short-chain dehydrogenases/reductases (SDR) family. As to quaternary structure, homodimer. In terms of tissue distribution, mostly expressed in seeds, and, to a lower extent, in roots, leaves, flowers and siliques.

The protein resides in the cytoplasm. In terms of biological role, NADPH-dependent pterin aldehyde reductase involved in pterin aldehyde salvage during folate turnover. Catalyzes the reduction of diverse aromatic and aliphatic aldehydes (e.g. acetaldehyde, n-propanal, 1-naphthaldehyde, benzaldehyde, cinnamaldehyde, n-butanal, n-hexanal, n-pentanal, 2-naphthaldehyde, n-octanal, n-nonanal and n-heptanal), in addition to the conversion of pterin-6-aldehyde (PtCHO) to 6-hydroxymethylpterin (PtCH(2)OH), and the conversion of dihydropterin-6-aldehyde (H(2)PtCHO) to 6-hydroxymethyldihydropterin (H(2)PtCH(2)OH). Cannot reduce the pterin ring. In Arabidopsis thaliana (Mouse-ear cress), this protein is NADPH-dependent pterin aldehyde reductase.